Consider the following 425-residue polypeptide: Glucan 1,3-beta-glucosidase (425 aa).

An N-terminal signal peptide occupies residues 1–19; the sequence is MNLTLLLLALIFSPSLIFS. Glutamate 219 (proton donor) is an active-site residue. Cystine bridges form between cysteine 301-cysteine 423 and cysteine 326-cysteine 352. The Nucleophile role is filled by glutamate 318.

Belongs to the glycosyl hydrolase 5 (cellulase A) family.

It localises to the secreted. The enzyme catalyses Successive hydrolysis of beta-D-glucose units from the non-reducing ends of (1-&gt;3)-beta-D-glucans, releasing alpha-glucose.. Its function is as follows. Beta-glucanases participate in the metabolism of beta-glucan, the main structural component of the cell wall. It could also function biosynthetically as a transglycosylase. The chain is Glucan 1,3-beta-glucosidase from Schwanniomyces occidentalis (Yeast).